Reading from the N-terminus, the 236-residue chain is Mammalian ependymin-related protein 1 (236 aa).

An N-terminal signal peptide occupies residues 1–35 (MPRRAPLRVARGSLDAWLLGGLWVCALGCLCGVGM). 3 disulfide bridges follow: Cys-54–Cys-184, Cys-100–Cys-234, and Cys-125–Cys-222. N-linked (GlcNAc...) asparagine glycans are attached at residues Asn-142 and Asn-194.

It belongs to the ependymin family. In terms of assembly, homodimer. In terms of processing, N-glycosylated; the glycan contains mannose-6-phosphate moieties.

The protein localises to the lysosome lumen. It localises to the secreted. Binds anionic lipids and gangliosides at acidic pH. The polypeptide is Mammalian ependymin-related protein 1 (EPDR1) (Bos taurus (Bovine)).